A 258-amino-acid chain; its full sequence is UPF0246 protein YaaA (258 aa).

It belongs to the UPF0246 family.

The chain is UPF0246 protein YaaA from Escherichia coli O157:H7 (strain EC4115 / EHEC).